The primary structure comprises 634 residues: Probable potassium transport system protein Kup 1 (634 aa).

The next 12 membrane-spanning stretches (helical) occupy residues 20-40, 64-84, 110-130, 148-168, 176-196, 224-244, 256-276, 290-310, 348-368, 377-397, 405-425, and 430-450; these read FLTLSLGSIGVVYGDIGTSPL, VMSLMLWTLVIIVTLKYVLLI, FAAISLLGMAGAALFYGDAII, PVFDPYILPLSMAILIGLFVV, VAAWFGPIMLLWFTVMALGGI, AGLLALGAVFLTVTGAEALYA, FAWFAVVFPALALCYLGQGAM, FLFPEWALLPMVGLATAATII, IYIPRANWLLLIAVLYLVFAF, AYGIAVTGTMVITSVMAYFVM, VATSALIIAPFLTVDLIFLMA, and IFEGGWIPLVIGGGLMGVMIT.

Belongs to the HAK/KUP transporter (TC 2.A.72) family.

The protein resides in the cell inner membrane. The catalysed reaction is K(+)(in) + H(+)(in) = K(+)(out) + H(+)(out). In terms of biological role, transport of potassium into the cell. Likely operates as a K(+):H(+) symporter. This is Probable potassium transport system protein Kup 1 from Rhodopseudomonas palustris (strain BisB5).